We begin with the raw amino-acid sequence, 563 residues long: Alpha-humulene synthase (563 aa).

Residues aspartate 316, aspartate 320, aspartate 461, and glutamate 469 each coordinate Mg(2+). The DDXXD motif motif lies at 316 to 320; that stretch reads DDIYD.

The protein belongs to the terpene synthase family. Tpsa subfamily. It depends on Mg(2+) as a cofactor. Mn(2+) serves as cofactor. Expressed in trichomes, cones and young leaves.

The catalysed reaction is (2E,6E)-farnesyl diphosphate = alpha-humulene + diphosphate. The protein operates within sesquiterpene biosynthesis. It functions in the pathway secondary metabolite biosynthesis; terpenoid biosynthesis. Its function is as follows. Sesquiterpene synthase that catalyzes the formation of alpha-humulene. Can use farnesyl diphosphate (FPP) as substrate, but not geranyl diphosphate (GPP) or geranylgeranyl diphosphate (GGPP). The sequence is that of Alpha-humulene synthase from Humulus lupulus (European hop).